The following is a 782-amino-acid chain: Hypersensitive to pore-forming toxin protein 40 (782 aa).

Residues E138–I203 enclose the Tudor; degenerate domain. Composition is skewed to polar residues over residues S332–M346 and F413–Q443. Disordered regions lie at residues S332 to Y351, F413 to D448, I472 to E492, and V617 to P672. Over residues V617–S634 the composition is skewed to polar residues. Residues D638 to D662 are compositionally biased toward basic and acidic residues.

The protein resides in the cytoplasm. It localises to the perinuclear region. The polypeptide is Hypersensitive to pore-forming toxin protein 40 (Caenorhabditis elegans).